A 40-amino-acid chain; its full sequence is VHVGPCDQVCSRIDPEKDECCRAHGYRGHSSCYYGRMECY.

Cystine bridges form between Cys-6-Cys-20, Cys-10-Cys-32, and Cys-21-Cys-39.

Monomer. Post-translationally, contains three disulfide bonds. Hemolymph.

Its subcellular location is the secreted. Functionally, fungicide. This is Spodomicin from Spodoptera littoralis (Egyptian cotton leafworm).